Consider the following 228-residue polypeptide: Chromatin remodeling protein SHL (228 aa).

A BAH domain is found at 21-137; it reads KSIQEGDAVL…STTGAFDPDR (117 aa). The PHD-type zinc-finger motif lies at 139-190; the sequence is TVFCKCEMPYNPDDLMVQCEECSEWFHPSCIGTTIEEAKKPDNFYCEECSPQ. Residues 191 to 203 are compositionally biased toward polar residues; the sequence is QQNLHNSNSTSNN. The disordered stretch occupies residues 191–228; that stretch reads QQNLHNSNSTSNNRDAKVNGKRSLEVTKSKNKHTKRPG. The segment covering 204–218 has biased composition (basic and acidic residues); the sequence is RDAKVNGKRSLEVTK. Positions 210–217 match the Nuclear localization signal motif; that stretch reads GKRSLEVT. A compositionally biased stretch (basic residues) spans 219 to 228; sequence SKNKHTKRPG.

It belongs to the SHL1/EBS protein family. In terms of assembly, recognizes di- and trimethylated histone H3 at lysine 4. Interacts with HDA6. Interacts with DEK3. In terms of tissue distribution, expressed ubiquitously. Mostly expressed in roots, stems, leaves and flowers, and, to a lower extent, in siliques.

It localises to the nucleus. Functionally, chromatin remodeling factor that binds to methylated histone (e.g. H3K4me2/3) to prevent their acetylation (e.g. H3K9K14Ac), likely by recruiting histone deacetylase (HDAC) complexes, and thus regulate the transcription of target genes. Required during development and for fertility, probably by modulating developmental gene expression. Promotes development speed, but at fitness cost. Involved in the chromatin-mediated repression of floral initiation and controls genes regulating flowering. Negatively regulates the expression of the floral integrator SOC1, by preventing high levels of H3 acetylation, thus maintaining an inactive chromatin conformation. The protein is Chromatin remodeling protein SHL of Arabidopsis thaliana (Mouse-ear cress).